A 394-amino-acid chain; its full sequence is Elongation factor Tu (394 aa).

In terms of domain architecture, tr-type G spans 10 to 204; sequence KPHVNVGTIG…HLDTYIPEPE (195 aa). The G1 stretch occupies residues 19–26; it reads GHVDHGKT. 19–26 contacts GTP; the sequence is GHVDHGKT. Mg(2+) is bound at residue threonine 26. The G2 stretch occupies residues 60–64; that stretch reads GITIN. The tract at residues 81-84 is G3; the sequence is DCPG. GTP is bound by residues 81 to 85 and 136 to 139; these read DCPGH and NKCD. Positions 136 to 139 are G4; sequence NKCD. Residues 174–176 are G5; that stretch reads SAL.

The protein belongs to the TRAFAC class translation factor GTPase superfamily. Classic translation factor GTPase family. EF-Tu/EF-1A subfamily. In terms of assembly, monomer.

It is found in the cytoplasm. The enzyme catalyses GTP + H2O = GDP + phosphate + H(+). Functionally, GTP hydrolase that promotes the GTP-dependent binding of aminoacyl-tRNA to the A-site of ribosomes during protein biosynthesis. The polypeptide is Elongation factor Tu (Actinobacillus pleuropneumoniae serotype 5b (strain L20)).